Reading from the N-terminus, the 283-residue chain is Serine protease 57 (283 aa).

The signal sequence occupies residues 1-31 (MGLGLRGWGRPLLTVATALMLPVKPPAGSWG). The 230-residue stretch at 34–263 (IIGGHEVTPH…FVAWIWDVVR (230 aa)) folds into the Peptidase S1 domain. Cys59 and Cys75 form a disulfide bridge. Catalysis depends on charge relay system residues His74 and Asp122. Residues Asn129 and Asn189 are each glycosylated (N-linked (GlcNAc...) asparagine). Disulfide bonds link Cys157–Cys224, Cys188–Cys202, and Cys214–Cys239. Ser218 (charge relay system) is an active-site residue.

Belongs to the peptidase S1 family. Post-translationally, after cleavage of the signal peptide, the N-terminus is probably further processed by CTSC. Processing by CTSC is probably required for accumulation in cytoplasmic granules; in the absence of CTSC the protein does not accumulate. N-glycosylated. As to expression, detected in peripheral blood neutrophil granulocytes, but not in other types of leukocytes. Detected in neutrophils and neutrophil precursors in bone marrow (at protein level). Detected in myeloblasts and promyelocytes in bone marrow.

Its subcellular location is the cytoplasmic granule lumen. The protein localises to the secreted. With respect to regulation, inhibited by SERPINA1, SERPINC1 and SERPING1. Serine protease that cleaves preferentially after Arg residues. Can also cleave after citrulline (deimidated arginine) and methylarginine residues. This is Serine protease 57 (PRSS57) from Homo sapiens (Human).